Reading from the N-terminus, the 92-residue chain is Small ribosomal subunit protein uS19c (92 aa).

The protein belongs to the universal ribosomal protein uS19 family.

The protein localises to the plastid. It is found in the chloroplast. Its function is as follows. Protein S19 forms a complex with S13 that binds strongly to the 16S ribosomal RNA. This is Small ribosomal subunit protein uS19c from Calycanthus floridus var. glaucus (Eastern sweetshrub).